The chain runs to 175 residues: Major oleosin NAP-II (175 aa).

Residues 1–47 (RRDQYPRDRDQYSMIGRDRDKYSMIGRDRDQYNMYGRDYSKSRQIAK) are polar. 2 consecutive repeats follow at residues 17–26 (RDRDKYSMIG) and 27–36 (RDRDQYNMYG). The tract at residues 48–119 (AVTAVTAGGS…AAITVFSWIY (72 aa)) is hydrophobic. 3 helical membrane passes run 56–76 (GSLLVLSSLTLVGTVIALTVA), 78–98 (PLLVIFSPILVPALITVALLI), and 99–119 (TGFLSSGGFGIAAITVFSWIY). The disordered stretch occupies residues 151–175 (AQYYGQQQTGGEDDRDRTRGTQHTT).

Belongs to the oleosin family.

It localises to the lipid droplet. The protein resides in the membrane. May have a structural role to stabilize the lipid body during desiccation of the seed by preventing coalescence of the oil. Probably interacts with both lipid and phospholipid moieties of lipid bodies. May also provide recognition signals for specific lipase anchorage in lipolysis during seedling growth. The chain is Major oleosin NAP-II from Brassica napus (Rape).